Reading from the N-terminus, the 394-residue chain is Tyrosine--tRNA ligase, cytoplasmic (394 aa).

Serine 2 carries the N-acetylserine modification. Position 43 (tyrosine 43) interacts with L-tyrosine. Positions 48–56 (PTGRPHCGY) match the 'HIGH' region motif. L-tyrosine is bound by residues tyrosine 170, glutamine 174, aspartate 177, and glutamine 192. The 'KMSKS' region motif lies at 227 to 231 (KMSAS). Position 235 is a phosphoserine (serine 235). Positions 348–394 (QEASEKGYPVATPQKSKKAKKPKNKGTKYPGATKTNEIATKLEETKL) are disordered. Threonine 359 carries the post-translational modification Phosphothreonine. A Nuclear localization signal motif is present at residues 360-378 (PQKSKKAKKPKNKGTKYPG). Over residues 362 to 373 (KSKKAKKPKNKG) the composition is skewed to basic residues.

The protein belongs to the class-I aminoacyl-tRNA synthetase family. Homodimer. Interacts with KNR4/SMI1.

Its subcellular location is the cytoplasm. The protein resides in the nucleus. It catalyses the reaction tRNA(Tyr) + L-tyrosine + ATP = L-tyrosyl-tRNA(Tyr) + AMP + diphosphate + H(+). Inhibited by N-ethylmaleimide and p-chloromercuribenzoate. Catalyzes the attachment of L-tyrosine to tRNA(Tyr) in a two-step reaction: L-tyrosine is first activated by ATP to form Tyr-AMP and then transferred to the acceptor end of tRNA(Tyr). The specificity determinants on tRNA(Tyr) are the base pair C1-G72, the discriminator residue A73, and the three anticodon bases G34, U35 and A36. Also involved in nuclear tRNA export. Also attaches D-Tyr to tRNA(Tyr), this reaction is about 150-fold less efficient than attachment of L-Tyr. The protein is Tyrosine--tRNA ligase, cytoplasmic of Saccharomyces cerevisiae (strain ATCC 204508 / S288c) (Baker's yeast).